Reading from the N-terminus, the 543-residue chain is MARYIFITGGVVSSLGKGLASAALGALLQARGYKVRLRKLDPYLNLDPGTMSPYQHGEVFVTDDGAETDLDLGHYERFTGRPATRQDNITTGRIYQDILTRERRGDYLGATIQVIPHVTNAIKAFILDGNDDHDFVLCEIGGTVGDIEGLPFFEAIRQLKNDLPRGHAIYVHLTLLPFIPSAGELKTKPTQHSVKELRSIGIQPDILLCRTDREIPAEERRKLGLFCNVRESAVIEARDADNIYAVPEVYHAAGLDDEVLAAFGIEPAAPPALKGWHDINERIRNPEGAVTIAIVGKYTGMKDAYKSLIEALSHGGIANKVKVNLDWIESEVFENEDAAPFLEHVDGILVPGGFGQRGAEGKIKAARFARERHVPYFGICFGMQMAVIEAARNLVGISDANSTEFGPTREPLVGLMTEWLRGSELEKRSKAGDLGGTMRLGAYPAMLKRGSRVSGIYGGAVEISERHRHRYEVNTAYKDRLEQHGLRFSGLSPDGVLPEIVEYQDHPWFIGVQYHPELKSRPFEPHPLFASFIQAAVVQSRLV.

Residues 1–265 are amidoligase domain; the sequence is MARYIFITGG…DDEVLAAFGI (265 aa). CTP is bound at residue Ser13. Ser13 serves as a coordination point for UTP. 14-19 lines the ATP pocket; the sequence is SLGKGL. Tyr54 is a binding site for L-glutamine. Asp71 is a binding site for ATP. Residues Asp71 and Glu139 each contribute to the Mg(2+) site. CTP is bound by residues 146–148, 186–191, and Lys222; these read DIE and KTKPTQ. Residues 186-191 and Lys222 each bind UTP; that span reads KTKPTQ. Residue 238–240 participates in ATP binding; the sequence is RDA. The 252-residue stretch at 291–542 folds into the Glutamine amidotransferase type-1 domain; it reads TIAIVGKYTG…IQAAVVQSRL (252 aa). Gly353 lines the L-glutamine pocket. Catalysis depends on Cys380, which acts as the Nucleophile; for glutamine hydrolysis. L-glutamine contacts are provided by residues 381 to 384, Glu404, and Arg470; that span reads FGMQ. Residues His515 and Glu517 contribute to the active site.

Belongs to the CTP synthase family. Homotetramer.

The catalysed reaction is UTP + L-glutamine + ATP + H2O = CTP + L-glutamate + ADP + phosphate + 2 H(+). It catalyses the reaction L-glutamine + H2O = L-glutamate + NH4(+). The enzyme catalyses UTP + NH4(+) + ATP = CTP + ADP + phosphate + 2 H(+). The protein operates within pyrimidine metabolism; CTP biosynthesis via de novo pathway; CTP from UDP: step 2/2. Its activity is regulated as follows. Allosterically activated by GTP, when glutamine is the substrate; GTP has no effect on the reaction when ammonia is the substrate. The allosteric effector GTP functions by stabilizing the protein conformation that binds the tetrahedral intermediate(s) formed during glutamine hydrolysis. Inhibited by the product CTP, via allosteric rather than competitive inhibition. Its function is as follows. Catalyzes the ATP-dependent amination of UTP to CTP with either L-glutamine or ammonia as the source of nitrogen. Regulates intracellular CTP levels through interactions with the four ribonucleotide triphosphates. This chain is CTP synthase, found in Nitrobacter winogradskyi (strain ATCC 25391 / DSM 10237 / CIP 104748 / NCIMB 11846 / Nb-255).